We begin with the raw amino-acid sequence, 297 residues long: Internalin C (297 aa).

The signal sequence occupies residues 1–34; that stretch reads MLKKNNWLQNAVIAMLVLIVGLCINMGSGTKVQA. LRR repeat units follow at residues 74 to 96, 97 to 120, 122 to 139, 140 to 161, 162 to 184, and 186 to 207; these read LSGV…MQFF, TNLK…DLTK, EELS…GIPS, ACLS…LIHL, KNLE…GFLS, and LEVL…RLKK.

The protein belongs to the internalin family. In terms of assembly, interacts in vitro with human intestinal mucin-2 (MUC2) but not with mucin-1; binding is slightly better at pH 5.5, (the pH of the intestine) than at pH 7.4. Interacts with the SH3 6 domain of human DNMBP (Tuba). Interacts with I-kappa-B kinase alpha (IKKA, CHUK).

It is found in the secreted. The protein localises to the host cytoplasm. In terms of biological role, a virulence enhancer that has at least 2 dissociable functions in infection; it impairs translocation of host transcription factor NF-kappa-B to the nucleus and antagonizes the function of the Tuba dynamin-binding protein, promoting bacterial spreading. Perturbs the morphology of host cell junctions by impairing host DNMBP (Tuba) and WASL interaction, altering cortical tension at the cell junctions and allowing bacteria to more efficiently form bacteria-filled cell protrusions which promote bacterial spreading within infected host tissue. Down-regulates the host inflammation response usually induced by Listeria infection. Interacts with host I-kappa-B kinase alpha (IKKA, CHUK), which prevents IKKA from phosphorylating NF-kappa-B inhibitor alpha (IKBA, NFKBIA) and thus delays degradation of phospho-IKBA. Translocation of host transcription factor p65 (a subunit of NF-kappa-B, RELA) into the nucleus is impaired, which prevents activation of NF-KB-regulated genes. Recognized by serum from healthy humans exposed to L.monocytogenes as well from patients who have recovered from listeriosis. This Listeria monocytogenes serotype 1/2a (strain EGD / Mackaness) protein is Internalin C.